The following is a 151-amino-acid chain: uncharacterized protein (151 aa).

This is an uncharacterized protein from Bacillus subtilis (strain 168).